The sequence spans 574 residues: 2-succinyl-5-enolpyruvyl-6-hydroxy-3-cyclohexene-1-carboxylate synthase (574 aa).

It belongs to the TPP enzyme family. MenD subfamily. Homodimer. The cofactor is Mg(2+). It depends on Mn(2+) as a cofactor. Thiamine diphosphate is required as a cofactor.

It catalyses the reaction isochorismate + 2-oxoglutarate + H(+) = 5-enolpyruvoyl-6-hydroxy-2-succinyl-cyclohex-3-ene-1-carboxylate + CO2. Its pathway is quinol/quinone metabolism; 1,4-dihydroxy-2-naphthoate biosynthesis; 1,4-dihydroxy-2-naphthoate from chorismate: step 2/7. It functions in the pathway cofactor biosynthesis; phylloquinone biosynthesis. Its function is as follows. Catalyzes the thiamine diphosphate-dependent decarboxylation of 2-oxoglutarate and the subsequent addition of the resulting succinic semialdehyde-thiamine pyrophosphate anion to isochorismate to yield 2-succinyl-5-enolpyruvyl-6-hydroxy-3-cyclohexene-1-carboxylate (SEPHCHC). This Synechococcus sp. (strain RCC307) protein is 2-succinyl-5-enolpyruvyl-6-hydroxy-3-cyclohexene-1-carboxylate synthase.